An 837-amino-acid chain; its full sequence is MEPAVGGPGPLIVNNKQPQPPPPPPPAAAQPPPGAPRAAAGLLPGGKAREFNRNQRKDSEGYSESPDLEFEYADTDKWAAELSELYSYTEGPEFLMNRKCFEEDFRIHVTDKKWTELDTNQHRTHAMRLLDGLEVTAREKRLKVARAILYVAQGTFGECSSEAEVQSWMRYNIFLLLEVGTFNALVELLNMEIDNSAACSSAVRKPAISLADSTDLRVLLNIMYLIVETVHQECEGDKAEWRTMRQTFRAELGSPLYNNEPFAIMLFGMVTKFCSGHAPHFPMKKVLLLLWKTVLCTLGGFEELQSMKAEKRSILGLPPLPEDSIKVIRNMRAASPPASASDLIEQQQKRGRREHKALIKQDNLDAFNERDPYKADDSREEEEENDDDNSLEGETFPLERDEVMPPPLQHPQTDRLTCPKGLPWAPKVREKDIEMFLESSRSKFIGYTLGSDTNTVVGLPRPIHESIKTLKQHKYTSIAEVQAQMEEEYLRSPLSGGEEEVEQVPAETLYQGLLPSLPQYMIALLKILLAAAPTSKAKTDSINILADVLPEEMPTTVLQSMKLGVDVNRHKEVIVKAISAVLLLLLKHFKLNHVYQFEYMAQHLVFANCIPLILKFFNQNIMSYITAKNSISVLDYPHCVVHELPELTAESLEAGDSNQFCWRNLFSCINLLRILNKLTKWKHSRTMMLVVFKSAPILKRALKVKQAMMQLYVLKLLKVQTKYLGRQWRKSNMKTMSAIYQKVRHRLNDDWAYGNDLDARPWDFQAEECALRANIERFNARRYDRAHSNPDFLPVDNCLQSVLGQRVDLPEDFQMNYDLWLEREVFSKPISWEELLQ.

Methionine 1 carries the post-translational modification N-acetylmethionine. 2 disordered regions span residues 1–67 (MEPA…ESPD) and 333–423 (AASP…KGLP). A compositionally biased stretch (pro residues) spans 18 to 35 (PQPPPPPPPAAAQPPPGA). The span at 36-46 (PRAAAGLLPGG) shows a compositional bias: low complexity. Basic and acidic residues predominate over residues 47-60 (KAREFNRNQRKDSE). 3 positions are modified to phosphoserine: serine 59, serine 335, and serine 339. Over residues 356-377 (KALIKQDNLDAFNERDPYKADD) the composition is skewed to basic and acidic residues. Over residues 378–391 (SREEEEENDDDNSL) the composition is skewed to acidic residues. Serine 788 carries the phosphoserine modification. The tract at residues 796 to 837 (DNCLQSVLGQRVDLPEDFQMNYDLWLEREVFSKPISWEELLQ) is required for STRIPAK core complex formation.

The protein belongs to the STRIP family. In terms of assembly, part of the core of STRIPAK complexes composed of PP2A catalytic and scaffolding subunits, the striatins (PP2A regulatory subunits), the striatin-associated proteins MOB4, STRIP1 and STRIP2, PDCD10 and members of the STE20 kinases, such as STK24 and STK26. The STRIPAK complex can be extended by adapter proteins such as SLMAP:SIKE1, CTTNBP2 or CTTNBP2NL. Interacts with CDC42BPB. Interacts with CTTNBP2NL.

It is found in the cytoplasm. Functionally, plays a role in the regulation of cell morphology and cytoskeletal organization. Required in the cortical actin filament dynamics and cell shape. Part of the striatin-interacting phosphatase and kinase (STRIPAK) complexes. STRIPAK complexes have critical roles in protein (de)phosphorylation and are regulators of multiple signaling pathways including Hippo, MAPK, nuclear receptor and cytoskeleton remodeling. Different types of STRIPAK complexes are involved in a variety of biological processes such as cell growth, differentiation, apoptosis, metabolism and immune regulation. The sequence is that of Striatin-interacting protein 1 from Homo sapiens (Human).